The chain runs to 256 residues: Alcohol dehydrogenase (256 aa).

12-35 contributes to the NAD(+) binding site; it reads FVAGLGGIGLDTSKELVKRDLKNL. A substrate-binding site is contributed by serine 140. Tyrosine 153 functions as the Proton acceptor in the catalytic mechanism.

The protein belongs to the short-chain dehydrogenases/reductases (SDR) family. Homodimer.

It carries out the reaction a primary alcohol + NAD(+) = an aldehyde + NADH + H(+). The catalysed reaction is a secondary alcohol + NAD(+) = a ketone + NADH + H(+). This chain is Alcohol dehydrogenase (Adh), found in Drosophila tsacasi (Fruit fly).